We begin with the raw amino-acid sequence, 360 residues long: Photosystem II protein D1 (360 aa).

3 helical membrane-spanning segments follow: residues 30 to 47 (YVGW…AAAI), 119 to 134 (HFLI…QWEL), and 143 to 157 (WICV…AAFA). Residue His119 coordinates chlorophyll a. Residue Trp127 coordinates pheophytin a. Positions 171 and 190 each coordinate [CaMn4O5] cluster. A helical transmembrane segment spans residues 198–219 (FHMAGVAGMFGGSLFSAMHGSL). A chlorophyll a-binding site is contributed by His199. Residues His216 and 265-266 (SF) each bind a quinone. His216 provides a ligand contact to Fe cation. Position 273 (His273) interacts with Fe cation. A helical membrane pass occupies residues 275 to 289 (FLAIFPVVCVWLTSM). The [CaMn4O5] cluster site is built by His333, Glu334, Asp343, and Ala345. A propeptide spanning residues 346–360 (AAESTSVALVAPSIG) is cleaved from the precursor.

The protein belongs to the reaction center PufL/M/PsbA/D family. As to quaternary structure, PSII is composed of 1 copy each of membrane proteins PsbA, PsbB, PsbC, PsbD, PsbE, PsbF, PsbH, PsbI, PsbJ, PsbK, PsbL, PsbM, PsbT, PsbX, PsbY, Psb30/Ycf12, peripheral proteins PsbO, CyanoQ (PsbQ), PsbU, PsbV and a large number of cofactors. It forms dimeric complexes. It depends on The D1/D2 heterodimer binds P680, chlorophylls that are the primary electron donor of PSII, and subsequent electron acceptors. It shares a non-heme iron and each subunit binds pheophytin, quinone, additional chlorophylls, carotenoids and lipids. D1 provides most of the ligands for the Mn4-Ca-O5 cluster of the oxygen-evolving complex (OEC). There is also a Cl(-1) ion associated with D1 and D2, which is required for oxygen evolution. The PSII complex binds additional chlorophylls, carotenoids and specific lipids. as a cofactor. Post-translationally, tyr-162 forms a radical intermediate that is referred to as redox-active TyrZ, YZ or Y-Z. C-terminally processed by CtpA; processing is essential to allow assembly of the oxygen-evolving complex and thus photosynthetic growth.

It localises to the cellular thylakoid membrane. The enzyme catalyses 2 a plastoquinone + 4 hnu + 2 H2O = 2 a plastoquinol + O2. Functionally, photosystem II (PSII) is a light-driven water:plastoquinone oxidoreductase that uses light energy to abstract electrons from H(2)O, generating O(2) and a proton gradient subsequently used for ATP formation. It consists of a core antenna complex that captures photons, and an electron transfer chain that converts photonic excitation into a charge separation. The D1/D2 (PsbA/PsbD) reaction center heterodimer binds P680, the primary electron donor of PSII as well as several subsequent electron acceptors. The protein is Photosystem II protein D1 of Prochlorococcus marinus (strain SARG / CCMP1375 / SS120).